The chain runs to 200 residues: ATP synthase subunit b 2 (200 aa).

Positions 1–16 are enriched in polar residues; it reads MAEQNILTTPSPNADT. The tract at residues 1 to 38 is disordered; that stretch reads MAEQNILTTPSPNADTTIVPPGSPHTHTEQPSGGHGGA. The helical transmembrane segment at 46–66 threads the bilayer; it reads TFLAQLIWLALAFGLLYYLMS.

Belongs to the ATPase B chain family. F-type ATPases have 2 components, F(1) - the catalytic core - and F(0) - the membrane proton channel. F(1) has five subunits: alpha(3), beta(3), gamma(1), delta(1), epsilon(1). F(0) has three main subunits: a(1), b(2) and c(10-14). The alpha and beta chains form an alternating ring which encloses part of the gamma chain. F(1) is attached to F(0) by a central stalk formed by the gamma and epsilon chains, while a peripheral stalk is formed by the delta and b chains.

The protein localises to the cell inner membrane. In terms of biological role, f(1)F(0) ATP synthase produces ATP from ADP in the presence of a proton or sodium gradient. F-type ATPases consist of two structural domains, F(1) containing the extramembraneous catalytic core and F(0) containing the membrane proton channel, linked together by a central stalk and a peripheral stalk. During catalysis, ATP synthesis in the catalytic domain of F(1) is coupled via a rotary mechanism of the central stalk subunits to proton translocation. Its function is as follows. Component of the F(0) channel, it forms part of the peripheral stalk, linking F(1) to F(0). The b'-subunit is a diverged and duplicated form of b found in plants and photosynthetic bacteria. In Methylorubrum populi (strain ATCC BAA-705 / NCIMB 13946 / BJ001) (Methylobacterium populi), this protein is ATP synthase subunit b 2 (atpF2).